We begin with the raw amino-acid sequence, 456 residues long: Keratin, type I cuticular Ha8 (456 aa).

A head region spans residues 1-104 (MTSSYSSSSC…YGENTLNGHE (104 aa)). Residues 104-415 (EKETMQFLND…NLLESEDCKL (312 aa)) enclose the IF rod domain. Residues 105–139 (KETMQFLNDRLANYLEKVRQLEQENAELEATLLER) form a coil 1A region. Residues 140 to 150 (SKCHESTVCPD) are linker 1. The interval 151–251 (YQSYFHTIEE…HEQEVKILRS (101 aa)) is coil 1B. The linker 12 stretch occupies residues 252–267 (QLGEKLRIELDIEPTI). The interval 268–411 (DLNRVLGEMR…ATYRNLLESE (144 aa)) is coil 2. A tail region spans residues 412-456 (DCKLPCNPCSTSPSCVTAPCAPRPSCGPCTTCGPTCGASTTGSRF).

The protein belongs to the intermediate filament family.

The polypeptide is Keratin, type I cuticular Ha8 (KRT38) (Homo sapiens (Human)).